Consider the following 306-residue polypeptide: Non-specific ribonucleoside hydrolase RihC (306 aa).

Residue histidine 235 is part of the active site.

The protein belongs to the IUNH family. RihC subfamily.

Its function is as follows. Hydrolyzes both purine and pyrimidine ribonucleosides with a broad-substrate specificity. The polypeptide is Non-specific ribonucleoside hydrolase RihC (Salmonella typhi).